Reading from the N-terminus, the 1368-residue chain is DNA-directed RNA polymerase subunit beta (1368 aa).

It belongs to the RNA polymerase beta chain family. The RNAP catalytic core consists of 2 alpha, 1 beta, 1 beta' and 1 omega subunit. When a sigma factor is associated with the core the holoenzyme is formed, which can initiate transcription.

The enzyme catalyses RNA(n) + a ribonucleoside 5'-triphosphate = RNA(n+1) + diphosphate. Its function is as follows. DNA-dependent RNA polymerase catalyzes the transcription of DNA into RNA using the four ribonucleoside triphosphates as substrates. In Desulfosudis oleivorans (strain DSM 6200 / JCM 39069 / Hxd3) (Desulfococcus oleovorans), this protein is DNA-directed RNA polymerase subunit beta.